A 279-amino-acid polypeptide reads, in one-letter code: MNIENKEITSSWFTNLRDLLCKEFEKIEEEYAQTKGLKPAKFVRSSWQRNGGGGGVMSLMKGAVFEKVGVNISTVFGKISSEFRNEIPGAELDGKFFATGISLVAHLKSPLIPAMHFNTRYIETSKSWFGGGGDLTPFYPEKNETVKFHAAFKEACDKYDSSYYPKFKKQCDEYFYLKHRKEPRGVGGIFYDYLNNGNFEQDFAFTQDVGKALLSVYPEIVRSKLFLPWTAEQKEYQLIRRGRYVEFNLLYDRGTKFGLMTDGNVEAILMSLPPEVKFN.

S102 is a substrate binding site. A divalent metal cation contacts are provided by H106 and H116. The active-site Proton donor is the H116. N118–R120 is a binding site for substrate. The a divalent metal cation site is built by H149 and H179. Positions Y244 to N279 are important for dimerization.

Belongs to the aerobic coproporphyrinogen-III oxidase family. As to quaternary structure, homodimer. A divalent metal cation serves as cofactor.

Its subcellular location is the cytoplasm. The catalysed reaction is coproporphyrinogen III + O2 + 2 H(+) = protoporphyrinogen IX + 2 CO2 + 2 H2O. Its pathway is porphyrin-containing compound metabolism; protoporphyrin-IX biosynthesis; protoporphyrinogen-IX from coproporphyrinogen-III (O2 route): step 1/1. Involved in the heme biosynthesis. Catalyzes the aerobic oxidative decarboxylation of propionate groups of rings A and B of coproporphyrinogen-III to yield the vinyl groups in protoporphyrinogen-IX. The chain is Oxygen-dependent coproporphyrinogen-III oxidase from Rickettsia africae (strain ESF-5).